Reading from the N-terminus, the 894-residue chain is DNA mismatch repair protein MutS (894 aa).

Residue 632-639 coordinates ATP; sequence GPNMGGKS.

This sequence belongs to the DNA mismatch repair MutS family.

Its function is as follows. This protein is involved in the repair of mismatches in DNA. It is possible that it carries out the mismatch recognition step. This protein has a weak ATPase activity. In Paraburkholderia xenovorans (strain LB400), this protein is DNA mismatch repair protein MutS.